Here is a 153-residue protein sequence, read N- to C-terminus: Prefoldin subunit alpha (153 aa).

Residues 126–153 (KRLEQGYRQAPGGSPVPHRHDHEDHDEE) form a disordered region. Residues 143–153 (HRHDHEDHDEE) show a composition bias toward basic and acidic residues.

Belongs to the prefoldin alpha subunit family. In terms of assembly, heterohexamer of two alpha and four beta subunits.

It is found in the cytoplasm. Its function is as follows. Molecular chaperone capable of stabilizing a range of proteins. Seems to fulfill an ATP-independent, HSP70-like function in archaeal de novo protein folding. This Methanoregula boonei (strain DSM 21154 / JCM 14090 / 6A8) protein is Prefoldin subunit alpha.